Consider the following 1331-residue polypeptide: Xanthine dehydrogenase/oxidase (1331 aa).

The 2Fe-2S ferredoxin-type domain occupies 4 to 91 (DELVFFVNGK…HVAVTTVEGI (88 aa)). Residues cysteine 43, cysteine 48, cysteine 51, cysteine 73, cysteine 113, cysteine 116, cysteine 148, and cysteine 150 each coordinate [2Fe-2S] cluster. An FAD-binding PCMH-type domain is found at 229–412 (FEGERVTWIQ…LSIEIPYSRE (184 aa)). Residues 257–264 (LVVGNTEI), phenylalanine 335, 345–349 (SIGGN), aspartate 358, leucine 402, and lysine 420 each bind FAD. An intrachain disulfide couples cysteine 534 to cysteine 991. Mo-molybdopterin-binding residues include glutamine 766 and phenylalanine 797. Residues glutamate 801 and arginine 879 each contribute to the substrate site. Arginine 911 serves as a coordination point for Mo-molybdopterin. The substrate site is built by phenylalanine 913 and threonine 1009. Position 1078 (alanine 1078) interacts with Mo-molybdopterin. Residue glutamate 1260 is the Proton acceptor of the active site.

This sequence belongs to the xanthine dehydrogenase family. Homodimer. Interacts with BTN1A1. FAD serves as cofactor. Requires Mo-molybdopterin as cofactor. It depends on [2Fe-2S] cluster as a cofactor. In terms of processing, subject to partial proteolysis; this alters the enzyme from the dehydrogenase form (D) to the oxidase form (O). Contains sulfhydryl groups that are easily oxidized (in vitro); this alters the enzyme from the dehydrogenase form (D) to the oxidase form (O).

It localises to the cytoplasm. The protein resides in the peroxisome. The protein localises to the secreted. It catalyses the reaction xanthine + NAD(+) + H2O = urate + NADH + H(+). It carries out the reaction hypoxanthine + NAD(+) + H2O = xanthine + NADH + H(+). The catalysed reaction is xanthine + O2 + H2O = urate + H2O2. Can be converted from the dehydrogenase form (D) to the oxidase form (O) irreversibly by proteolysis or reversibly through the oxidation of sulfhydryl groups. In terms of biological role, key enzyme in purine degradation. Catalyzes the oxidation of hypoxanthine to xanthine. Catalyzes the oxidation of xanthine to uric acid. Contributes to the generation of reactive oxygen species. The sequence is that of Xanthine dehydrogenase/oxidase (XDH) from Felis catus (Cat).